Reading from the N-terminus, the 32-residue chain is Chaperone protein DnaK (32 aa).

The protein belongs to the heat shock protein 70 family.

Functionally, acts as a chaperone. The sequence is that of Chaperone protein DnaK from Anabaena sp. (strain L31).